The chain runs to 505 residues: E3 SUMO-protein ligase PIAS4-A (505 aa).

One can recognise an SAP domain in the interval valine 12 to valine 46. The LXXLL motif signature appears at leucine 20 to leucine 24. A Glycyl lysine isopeptide (Lys-Gly) (interchain with G-Cter in SUMO); alternate cross-link involves residue lysine 35. Lysine 35 is covalently cross-linked (Glycyl lysine isopeptide (Lys-Gly) (interchain with G-Cter in SUMO2); alternate). Glycyl lysine isopeptide (Lys-Gly) (interchain with G-Cter in SUMO2) cross-links involve residues lysine 56 and lysine 68. Positions glycine 104–phenylalanine 264 constitute a PINIT domain. Residues proline 296–glutamate 381 form an SP-RING-type zinc finger. Residues cysteine 327, histidine 329, cysteine 350, and cysteine 353 each coordinate Zn(2+). The interval glutamate 374 to tyrosine 505 is required for nuclear localization. Over residues aspartate 395 to arginine 407 the composition is skewed to basic and acidic residues. Positions aspartate 395–tyrosine 505 are disordered. Gly residues predominate over residues serine 437–threonine 457. The span at threonine 462–glutamine 485 shows a compositional bias: acidic residues. Residues glycine 493–tyrosine 505 are compositionally biased toward basic and acidic residues.

This sequence belongs to the PIAS family. Post-translationally, sumoylated. Lys-35 is the main site of sumoylation. Highly expressed in spleen, liver, and brain. Expressed at lower levels in heart, intestine, kidney, gill, skin, and muscle.

The protein localises to the nucleus. The catalysed reaction is S-ubiquitinyl-[E2 ubiquitin-conjugating enzyme]-L-cysteine + [acceptor protein]-L-lysine = [E2 ubiquitin-conjugating enzyme]-L-cysteine + N(6)-ubiquitinyl-[acceptor protein]-L-lysine.. Its pathway is protein modification; protein sumoylation. Its function is as follows. Functions as an E3-type small ubiquitin-like modifier (SUMO) ligase. May play a role as a transcriptional coregulator in various cellular pathways. Catalyzes conjugation of SUMO2 to KAT5 in response to DNA damage, facilitating repair of DNA double-strand breaks (DSBs) via homologous recombination (HR). Mediates sumoylation of PARP1 in response to PARP1 trapping to chromatin. Negatively regulates induction of interferon phi 1 (ifnphi1) mediated by mavs and ticam1/trif. Also inhibits ifnphi1-mediated activation of the interferon-stimulated genes (ISGs) pkz and cd40, and to a lesser extent rsad2 and isg15. May inhibit ticam1/trif-mediated activation of NF-kappa-B. This chain is E3 SUMO-protein ligase PIAS4-A, found in Danio rerio (Zebrafish).